The following is a 461-amino-acid chain: CASP-like protein 4U1 (461 aa).

Positions 1 to 239 (MASTPRTPAP…RAAETKLPLS (239 aa)) are disordered. Residues 1 to 314 (MASTPRTPAP…AAVAVGERRE (314 aa)) are Cytoplasmic-facing. The segment covering 7-69 (TPAPVRSPPP…PLETPPPPSP (63 aa)) has biased composition (pro residues). 2 stretches are compositionally biased toward low complexity: residues 116–126 (LSPMRLAAPRL) and 135–155 (TPTGQNGQEEQEGGAKAAAAG). Over residues 193–204 (SPSPSPTPPSPL) the composition is skewed to pro residues. The span at 205–221 (TPAAAPVVNNNSNNKNN) shows a compositional bias: low complexity. Residues 315-335 (LSVTLRLATAVLSLAAFSVIA) form a helical membrane-spanning segment. Residues 336 to 354 (SARTSGWAGDYYAHHLQYR) lie on the Extracellular side of the membrane. The helical transmembrane segment at 355–375 (YAVAVNVIVCAYSIAQSFGEI) threads the bilayer. Over 376-392 (RRLISPRFIFRSMSSYY) the chain is Cytoplasmic. A helical membrane pass occupies residues 393-413 (CSLFLDQALAYLLMSASSAAA). The Extracellular portion of the chain corresponds to 414 to 431 (SRNDLWVSRFGTDAFNRK). A helical transmembrane segment spans residues 432–452 (ITSALWLSFIAFLMLALNALI). The Cytoplasmic portion of the chain corresponds to 453-461 (STANLFSML).

This sequence belongs to the Casparian strip membrane proteins (CASP) family. In terms of assembly, homodimer and heterodimers.

It localises to the cell membrane. The sequence is that of CASP-like protein 4U1 from Sorghum bicolor (Sorghum).